A 401-amino-acid chain; its full sequence is Argininosuccinate synthase (401 aa).

Residues 10–18 and alanine 38 each bind ATP; that span reads AYSGGVDTS. Tyrosine 89 serves as a coordination point for L-citrulline. Residue glycine 119 coordinates ATP. Positions 121, 125, and 126 each coordinate L-aspartate. Asparagine 125 lines the L-citrulline pocket. L-citrulline-binding residues include arginine 129, serine 177, serine 186, glutamate 262, and tyrosine 274.

It belongs to the argininosuccinate synthase family. Type 1 subfamily. As to quaternary structure, homotetramer.

Its subcellular location is the cytoplasm. The catalysed reaction is L-citrulline + L-aspartate + ATP = 2-(N(omega)-L-arginino)succinate + AMP + diphosphate + H(+). Its pathway is amino-acid biosynthesis; L-arginine biosynthesis; L-arginine from L-ornithine and carbamoyl phosphate: step 2/3. This Prochlorococcus marinus (strain MIT 9303) protein is Argininosuccinate synthase.